The sequence spans 1171 residues: APC-related protein 1 (1171 aa).

The disordered stretch occupies residues 1 to 54 (MSSSSSDENETTIHSSSNPGSSGIYSQLKAGSSKRPSVRHDVSDAEDDEEPYEG). Residues 1 to 481 (MSSSSSDENE…LSLRATRASP (481 aa)) form a required for interaction with bar-1 and hmp-2 region. Residues 15–26 (SSSNPGSSGIYS) show a composition bias toward low complexity. The ARM repeat unit spans residues 312–356 (NCLKVLANILSPDARFTTLVDSASGILKYVSQYLATNSSHLELRS). Disordered regions lie at residues 587 to 617 (PVDDDLDIPTSTVMGTRSNSERSLGSMNPGS), 662 to 699 (HPEDNQMTTPPNHPSTQNTTHYSSGSANTMTRSDGTTV), 720 to 741 (RKTSEDLESPDDILPGPSLEVE), 767 to 822 (EEMP…EMTT), 837 to 936 (PRSR…TMRI), and 995 to 1030 (SSGSGSSLQKAETTAGSRDSGALATSTPIGSVSSLP). The segment at 591–1171 (DLDIPTSTVM…NPKQMLVTIV (581 aa)) is required for interaction with pry-1. 2 stretches are compositionally biased toward polar residues: residues 595–617 (PTSTVMGTRSNSERSLGSMNPGS) and 666–697 (NQMTTPPNHPSTQNTTHYSSGSANTMTRSDGT). A compositionally biased stretch (polar residues) spans 788-799 (FSPSQKTTSSPA). The span at 857 to 874 (EPDRSSHSKNEEADRRDA) shows a compositional bias: basic and acidic residues. 2 stretches are compositionally biased toward polar residues: residues 890–913 (RGSSPQQQQLHRMESLESQASSED) and 1002–1028 (LQKAETTAGSRDSGALATSTPIGSVSS).

Belongs to the adenomatous polyposis coli (APC) family. In terms of assembly, interacts (via N-terminus) with bar-1 and hmp-2; the interaction with hmp-2 is relatively weak. Interacts (via C-terminus) with pry-1 (via N-terminus). Probably associates with bar-1, gsk-3, pry-1 in a complex.

The protein localises to the cell junction. The protein resides in the adherens junction. It is found in the cytoplasm. It localises to the nucleus. Functionally, has a role in endoderm cell specification and pharyngeal development. Required for the migration of epithelial cells, organization of the anterior seam cells and ceh-13 expression during embryo morphogenesis. Prevents hyperactivation of the Wnt signaling pathway during endoderm development, probably by preventing hmp-2 nuclear translocation. During larval development, apr-1 is required for expression of lin-39 in P3-8.p. Shown to negatively regulate Wnt signaling in vulval precursor cells. Has a role in cell division by establishing the polarity of the mother cell which forms the asymmetries of the daughter nuclei. Thought to regulate export of wrm-1 from the nucleus possibly as part of a complex involving pry-1. The polypeptide is APC-related protein 1 (Caenorhabditis briggsae).